The chain runs to 670 residues: Probable membrane-anchored ferredoxin csal_0991 (670 aa).

The next 5 helical transmembrane spans lie at 2–22, 68–90, 94–113, 135–155, and 159–179; these read LDIL…IGAV, VATA…LGLA, LGWL…LFVA, LMAF…VLPA, and GWLV…ELVF. 2 4Fe-4S ferredoxin-type domains span residues 241–271 and 316–347; these read WNQL…PLNP and GTAL…HVDA. The [4Fe-4S] cluster site is built by Cys250, Cys253, Cys256, Cys260, Cys328, Cys331, Cys334, and Cys338. A disordered region spans residues 648 to 670; that stretch reads NTPPATPASHDTAASQATEEVLS. Residues 659–670 are compositionally biased toward polar residues; the sequence is TAASQATEEVLS.

Requires [4Fe-4S] cluster as cofactor.

It localises to the cell inner membrane. In terms of biological role, participates in the electron transfer process during N,N-dimethylglycine (DMG) degradation to sarcosine. Probably transfers the electrons from N,N-dimethylglycine/sarcosine dehydrogenase (DMGDH) to the electron transfer flavoprotein (ETF) EtfA-EtfB. The chain is Probable membrane-anchored ferredoxin csal_0991 from Chromohalobacter salexigens (strain ATCC BAA-138 / DSM 3043 / CIP 106854 / NCIMB 13768 / 1H11).